Reading from the N-terminus, the 151-residue chain is UPF0756 membrane protein GK2737 (151 aa).

Helical transmembrane passes span 5–25, 53–73, 79–99, and 121–141; these read VLFL…SLIV, WGVT…EIGF, SLQS…ALIA, and ILAV…AGIA.

This sequence belongs to the UPF0756 family.

It localises to the cell membrane. This Geobacillus kaustophilus (strain HTA426) protein is UPF0756 membrane protein GK2737.